A 308-amino-acid polypeptide reads, in one-letter code: Porphobilinogen deaminase (308 aa).

At Cys-241 the chain carries S-(dipyrrolylmethanemethyl)cysteine.

It belongs to the HMBS family. Monomer. Dipyrromethane is required as a cofactor.

It catalyses the reaction 4 porphobilinogen + H2O = hydroxymethylbilane + 4 NH4(+). It participates in porphyrin-containing compound metabolism; protoporphyrin-IX biosynthesis; coproporphyrinogen-III from 5-aminolevulinate: step 2/4. Tetrapolymerization of the monopyrrole PBG into the hydroxymethylbilane pre-uroporphyrinogen in several discrete steps. The protein is Porphobilinogen deaminase of Staphylococcus epidermidis (strain ATCC 35984 / DSM 28319 / BCRC 17069 / CCUG 31568 / BM 3577 / RP62A).